Here is a 488-residue protein sequence, read N- to C-terminus: Solute carrier family 41 member 3 (488 aa).

Basic and acidic residues-rich tracts occupy residues 1-19 (MEGTEARQRRLEGCGRLKE) and 27-36 (DAGRLPKASE). The tract at residues 1–36 (MEGTEARQRRLEGCGRLKELGPLPSHDAGRLPKASE) is disordered. A run of 9 helical transmembrane segments spans residues 63 to 83 (LIIGFQVVIPFLLAGVGLSWA), 147 to 167 (LAVVQVQATVVGLLAAVASLM), 189 to 209 (VITAFLAALALGILMICIVIG), 220 to 240 (IATPIAASLGDLITLSILALM), 251 to 271 (WYLTPLVCVGFLALTPLWLFI), 284 to 304 (YGWFPIILAMIISSFGGLILS), 377 to 397 (VLLFLVVPGHLIFFYLICLVE), 406 to 426 (IFILLYLVAGVVQVVILLYLA), and 450 to 470 (GLGDLLGTSLLALCFFLDWLL).

The protein belongs to the SLC41A transporter family.

It is found in the mitochondrion inner membrane. The enzyme catalyses Mg(2+)(in) + 2 Na(+)(out) = Mg(2+)(out) + 2 Na(+)(in). In terms of biological role, na(+)/Mg(2+) ion exchanger that acts as a predominant Mg(2+) efflux system at the mitochondrial inner membrane. The chain is Solute carrier family 41 member 3 (Slc41a3) from Mus musculus (Mouse).